The primary structure comprises 380 residues: Pectin lyase (380 aa).

The first 20 residues, 1-20 (MRSASILSAALAAFAPLASA), serve as a signal peptide directing secretion. Asn-130 is a glycosylation site (N-linked (GlcNAc...) asparagine).

Belongs to the polysaccharide lyase 1 family.

It localises to the secreted. It catalyses the reaction Eliminative cleavage of (1-&gt;4)-alpha-D-galacturonan methyl ester to give oligosaccharides with 4-deoxy-6-O-methyl-alpha-D-galact-4-enuronosyl groups at their non-reducing ends.. The polypeptide is Pectin lyase (PNLA) (Colletotrichum gloeosporioides (Anthracnose fungus)).